The sequence spans 379 residues: Succinyl-diaminopimelate desuccinylase (379 aa).

His70 is a Zn(2+) binding site. Asp72 is a catalytic residue. Asp103 is a Zn(2+) binding site. Glu137 functions as the Proton acceptor in the catalytic mechanism. 3 residues coordinate Zn(2+): Glu138, Glu166, and His352.

The protein belongs to the peptidase M20A family. DapE subfamily. Homodimer. Zn(2+) serves as cofactor. Co(2+) is required as a cofactor.

It catalyses the reaction N-succinyl-(2S,6S)-2,6-diaminopimelate + H2O = (2S,6S)-2,6-diaminopimelate + succinate. Its pathway is amino-acid biosynthesis; L-lysine biosynthesis via DAP pathway; LL-2,6-diaminopimelate from (S)-tetrahydrodipicolinate (succinylase route): step 3/3. In terms of biological role, catalyzes the hydrolysis of N-succinyl-L,L-diaminopimelic acid (SDAP), forming succinate and LL-2,6-diaminopimelate (DAP), an intermediate involved in the bacterial biosynthesis of lysine and meso-diaminopimelic acid, an essential component of bacterial cell walls. The polypeptide is Succinyl-diaminopimelate desuccinylase (Shewanella baltica (strain OS155 / ATCC BAA-1091)).